Here is a 332-residue protein sequence, read N- to C-terminus: Glyceraldehyde-3-phosphate dehydrogenase (332 aa).

Residues 11–12 (RI), Asp34, Arg78, and Ser120 each bind NAD(+). D-glyceraldehyde 3-phosphate is bound by residues 151–153 (SCT), Thr182, Arg197, 210–211 (TG), and Arg233. Catalysis depends on Cys152, which acts as the Nucleophile. Asn314 contributes to the NAD(+) binding site.

This sequence belongs to the glyceraldehyde-3-phosphate dehydrogenase family. As to quaternary structure, homotetramer.

The protein resides in the cytoplasm. It catalyses the reaction D-glyceraldehyde 3-phosphate + phosphate + NAD(+) = (2R)-3-phospho-glyceroyl phosphate + NADH + H(+). It functions in the pathway carbohydrate degradation; glycolysis; pyruvate from D-glyceraldehyde 3-phosphate: step 1/5. Catalyzes the oxidative phosphorylation of glyceraldehyde 3-phosphate (G3P) to 1,3-bisphosphoglycerate (BPG) using the cofactor NAD. The first reaction step involves the formation of a hemiacetal intermediate between G3P and a cysteine residue, and this hemiacetal intermediate is then oxidized to a thioester, with concomitant reduction of NAD to NADH. The reduced NADH is then exchanged with the second NAD, and the thioester is attacked by a nucleophilic inorganic phosphate to produce BPG. This is Glyceraldehyde-3-phosphate dehydrogenase (gap) from Kitasatospora aureofaciens (Streptomyces aureofaciens).